A 1216-amino-acid polypeptide reads, in one-letter code: Probable phospholipid-transporting ATPase 4 (1216 aa).

Topologically, residues 1 to 74 are cytoplasmic; it reads MARGRIRSKL…TTRYNLITFF (74 aa). Residues 75–96 traverse the membrane as a helical segment; that stretch reads PKCLYEQFHRAANFYFLVAAIL. Residues 97 to 100 lie on the Extracellular side of the membrane; sequence SVFP. Residues 101 to 123 form a helical membrane-spanning segment; sequence LSPFNKWSMIAPLVFVVGLSMLK. The Cytoplasmic segment spans residues 124–305; it reads EALEDWSRFM…SRIEKTMDYI (182 aa). The helical transmembrane segment at 306–327 threads the bilayer; sequence IYTLLVLLILISCISSSGFAWE. The Extracellular segment spans residues 328–359; the sequence is TKFHMPKWWYLRPEEPENLTNPSNPVYAGFVH. A helical transmembrane segment spans residues 360 to 377; it reads LITALLLYGYLIPISLYV. At 378–922 the chain is on the cytoplasmic side; sequence SIEVVKVLQA…HGHWCYKRIA (545 aa). Asp-425 acts as the 4-aspartylphosphate intermediate in catalysis. Lys-605 is covalently cross-linked (Glycyl lysine isopeptide (Lys-Gly) (interchain with G-Cter in ubiquitin)). Positions 867 and 871 each coordinate Mg(2+). Residues 923-942 traverse the membrane as a helical segment; the sequence is QMICYFFYKNIAFGLTLFYF. The Extracellular segment spans residues 943–956; it reads EAFTGFSGQSVYND. The chain crosses the membrane as a helical span at residues 957 to 976; it reads YYLLLFNVVLTSLPVIALGV. The Cytoplasmic portion of the chain corresponds to 977-1006; that stretch reads FEQDVSSEICLQFPALYQQGKKNLFFDWYR. The chain crosses the membrane as a helical span at residues 1007–1029; it reads ILGWMGNGVYSSLVIFFLNIGII. The Extracellular portion of the chain corresponds to 1030-1042; it reads YEQAFRVSGQTAD. Residues 1043-1065 form a helical membrane-spanning segment; it reads MDAVGTTMFTCIIWAVNVQIALT. The Cytoplasmic portion of the chain corresponds to 1066 to 1071; that stretch reads VSHFTW. A helical membrane pass occupies residues 1072 to 1092; it reads IQHVLIWGSIGLWYLFVALYG. The Extracellular portion of the chain corresponds to 1093–1109; the sequence is MMPPSLSGNIYRILVEI. The helical transmembrane segment at 1110–1134 threads the bilayer; it reads LAPAPIYWIATFLVTVTTVLPYFAH. The Cytoplasmic portion of the chain corresponds to 1135–1216; the sequence is ISFQRFLHPL…TQDTMSPRSV (82 aa). A disordered region spans residues 1195 to 1216; that stretch reads LNKKQSNMSQFSTQDTMSPRSV. The span at 1198-1216 shows a compositional bias: polar residues; that stretch reads KQSNMSQFSTQDTMSPRSV.

The protein belongs to the cation transport ATPase (P-type) (TC 3.A.3) family. Type IV subfamily.

It localises to the membrane. The catalysed reaction is ATP + H2O + phospholipidSide 1 = ADP + phosphate + phospholipidSide 2.. Its function is as follows. Involved in transport of phospholipids. This chain is Probable phospholipid-transporting ATPase 4, found in Arabidopsis thaliana (Mouse-ear cress).